Reading from the N-terminus, the 464-residue chain is tRNA-2-methylthio-N(6)-dimethylallyladenosine synthase (464 aa).

Positions Gly19–Leu135 constitute an MTTase N-terminal domain. Positions 28, 64, 98, 170, 174, and 177 each coordinate [4Fe-4S] cluster. In terms of domain architecture, Radical SAM core spans Arg156–Arg394. The region spanning Gln396–Leu464 is the TRAM domain.

This sequence belongs to the methylthiotransferase family. MiaB subfamily. Monomer. Requires [4Fe-4S] cluster as cofactor.

Its subcellular location is the cytoplasm. It carries out the reaction N(6)-dimethylallyladenosine(37) in tRNA + (sulfur carrier)-SH + AH2 + 2 S-adenosyl-L-methionine = 2-methylsulfanyl-N(6)-dimethylallyladenosine(37) in tRNA + (sulfur carrier)-H + 5'-deoxyadenosine + L-methionine + A + S-adenosyl-L-homocysteine + 2 H(+). Catalyzes the methylthiolation of N6-(dimethylallyl)adenosine (i(6)A), leading to the formation of 2-methylthio-N6-(dimethylallyl)adenosine (ms(2)i(6)A) at position 37 in tRNAs that read codons beginning with uridine. In Prochlorococcus marinus (strain MIT 9301), this protein is tRNA-2-methylthio-N(6)-dimethylallyladenosine synthase.